Here is a 490-residue protein sequence, read N- to C-terminus: Colicin-10 (490 aa).

Polar residues predominate over residues 1 to 20 (MDKVTDNSPDVESTESTEGS). Disordered stretches follow at residues 1–29 (MDKVTDNSPDVESTESTEGSFPTVGVDTG) and 146–171 (QKAREEAEAAEKALREAERQRDEIAR). Residues 146-170 (QKAREEAEAAEKALREAERQRDEIA) show a composition bias toward basic and acidic residues. A helical membrane pass occupies residues 447 to 467 (IVALMFSFIVGAPLGFWGIAI).

This sequence belongs to the channel forming colicin family.

The protein localises to the host membrane. This colicin is a channel-forming colicin. This class of transmembrane toxins depolarize the cytoplasmic membrane, leading to dissipation of cellular energy. Its function is as follows. Colicins are polypeptide toxins produced by and active against E.coli and closely related bacteria. In Escherichia coli, this protein is Colicin-10 (cta).